The following is an 892-amino-acid chain: Zinc finger protein 473 homolog (892 aa).

The 79-residue stretch at 23–101 folds into the KRAB domain; the sequence is ETLKDLAMDF…TKSSPLQSGF (79 aa). 2 stretches are compositionally biased toward polar residues: residues 66 to 76 and 84 to 97; these read DTSQPSLTSQP and ATST…SSPL. Disordered regions lie at residues 66-97 and 134-203; these read DTSQ…SSPL and GDPE…DSVQ. Composition is skewed to basic and acidic residues over residues 138-156 and 190-203; these read SLPR…HQSP and KESR…DSVQ. 2 C2H2-type zinc fingers span residues 209-231 and 265-287; these read YKCS…WVLH and YTCQ…QKIH. A compositionally biased stretch (polar residues) spans 297 to 308; it reads SDSNLEGLSRSP. Residues 297–370 form a disordered region; it reads SDSNLEGLSR…HPKPLRHQKT (74 aa). 2 stretches are compositionally biased toward basic and acidic residues: residues 313–323 and 332–353; these read GKQRLSKDTDS and QDQE…ESQP. 8 consecutive C2H2-type zinc fingers follow at residues 377–399, 404–426, 432–454, 460–482, 488–510, 516–538, 544–566, and 572–594; these read FRCK…QRAH, YKCA…RKSH, CECQ…QAIH, YKCD…QRIH, HKCS…QRVH, HQCP…RLRH, FGCA…NKIH, and YECK…LSIH. Lysine 476 is covalently cross-linked (Glycyl lysine isopeptide (Lys-Gly) (interchain with G-Cter in SUMO2)). Residue lysine 602 forms a Glycyl lysine isopeptide (Lys-Gly) (interchain with G-Cter in SUMO2) linkage. A C2H2-type 11; degenerate zinc finger spans residues 697–719; the sequence is FKCDIYNRAFKQRAHLSKHQLIH. 6 C2H2-type zinc fingers span residues 725 to 747, 753 to 775, 781 to 803, 809 to 831, 837 to 859, and 865 to 887; these read FKCN…QKTH, FECS…QKIH, FKCG…QRIH, YVCQ…LRIH, YTCG…ERIH, and YACG…QRIH.

The protein belongs to the krueppel C2H2-type zinc-finger protein family. In terms of assembly, interacts with the SLBP/pre-mRNA complex but not with SLBP alone. Interacts with LSM11 in a U7 snRNP-dependent manner.

Its subcellular location is the nucleus. Involved in histone 3'-end pre-mRNA processing by associating with U7 snRNP and interacting with SLBP/pre-mRNA complex. Increases histone 3'-end pre-mRNA processing but has no effect on U7 snRNP levels, when overexpressed. Required for cell cycle progression from G1 to S phases. This chain is Zinc finger protein 473 homolog (Znf473), found in Mus musculus (Mouse).